The chain runs to 304 residues: Ribonuclease HII (304 aa).

Residues 1 to 53 (MIRDTKQPIKVPAKPASRSGGKAKTVKPKTVKPKAVKAADGKAASAKASTSKA) are disordered. Basic residues predominate over residues 24–35 (KTVKPKTVKPKA). Low complexity predominate over residues 36–53 (VKAADGKAASAKASTSKA). An RNase H type-2 domain is found at 96–284 (WPIAGCDEAG…VAAAWQKIEG (189 aa)). Positions 102, 103, and 193 each coordinate a divalent metal cation.

This sequence belongs to the RNase HII family. Requires Mn(2+) as cofactor. Mg(2+) is required as a cofactor.

It localises to the cytoplasm. The enzyme catalyses Endonucleolytic cleavage to 5'-phosphomonoester.. In terms of biological role, endonuclease that specifically degrades the RNA of RNA-DNA hybrids. The protein is Ribonuclease HII of Rhodopseudomonas palustris (strain ATCC BAA-98 / CGA009).